The chain runs to 475 residues: Ankyrin repeat, SAM and basic leucine zipper domain-containing protein 1 (475 aa).

A disordered region spans residues 1–25 (MAAGALRGLPVAGGGESSESEDDGW). 3 positions are modified to phosphoserine: serine 17, serine 18, and serine 20. 6 ANK repeats span residues 45–74 (EKKE…SVDS), 78–107 (YGWT…NASF), 110–144 (DKQT…DPNV), 148–177 (RLMT…EVNT), 181–210 (NGYT…NKML), and 214–243 (DGKM…PLEG). An SAM domain is found at 272–334 (SYTAFGDLEV…KILAALKELQ (63 aa)).

In terms of assembly, interacts with DDX4, PIWIL1, RANBP9 and TDRD1.

The protein localises to the cytoplasm. Plays a central role during spermatogenesis by repressing transposable elements and preventing their mobilization, which is essential for the germline integrity. Acts via the piRNA metabolic process, which mediates the repression of transposable elements during meiosis by forming complexes composed of piRNAs and Piwi proteins and governs the methylation and subsequent repression of transposons. Its association with pi-bodies suggests a participation in the primary piRNAs metabolic process. Required prior to the pachytene stage to facilitate the production of multiple types of piRNAs, including those associated with repeats involved in the regulation of retrotransposons. May act by mediating protein-protein interactions during germ cell maturation. This Chlorocebus aethiops (Green monkey) protein is Ankyrin repeat, SAM and basic leucine zipper domain-containing protein 1 (ASZ1).